The primary structure comprises 467 residues: Glutamate--tRNA ligase (467 aa).

The 'HIGH' region motif lies at 9–19 (PSPTGFLHIGG). The short motif at 250-254 (KLSKR) is the 'KMSKS' region element. Lys253 contacts ATP.

Belongs to the class-I aminoacyl-tRNA synthetase family. Glutamate--tRNA ligase type 1 subfamily. As to quaternary structure, monomer.

It localises to the cytoplasm. The enzyme catalyses tRNA(Glu) + L-glutamate + ATP = L-glutamyl-tRNA(Glu) + AMP + diphosphate. Functionally, catalyzes the attachment of glutamate to tRNA(Glu) in a two-step reaction: glutamate is first activated by ATP to form Glu-AMP and then transferred to the acceptor end of tRNA(Glu). The chain is Glutamate--tRNA ligase from Mesomycoplasma hyopneumoniae (strain 232) (Mycoplasma hyopneumoniae).